A 377-amino-acid chain; its full sequence is Queuine tRNA-ribosyltransferase (377 aa).

Asp89 functions as the Proton acceptor in the catalytic mechanism. Substrate is bound by residues 89–93, Asp143, Gln188, and Gly215; that span reads DSGGF. Residues 246–252 form an RNA binding region; sequence GVGKPED. Residue Asp265 is the Nucleophile of the active site. Positions 270–274 are RNA binding; important for wobble base 34 recognition; sequence TRNAR. The Zn(2+) site is built by Cys303, Cys305, Cys308, and His334.

Belongs to the queuine tRNA-ribosyltransferase family. In terms of assembly, homodimer. Within each dimer, one monomer is responsible for RNA recognition and catalysis, while the other monomer binds to the replacement base PreQ1. Requires Zn(2+) as cofactor.

The catalysed reaction is 7-aminomethyl-7-carbaguanine + guanosine(34) in tRNA = 7-aminomethyl-7-carbaguanosine(34) in tRNA + guanine. The protein operates within tRNA modification; tRNA-queuosine biosynthesis. In terms of biological role, catalyzes the base-exchange of a guanine (G) residue with the queuine precursor 7-aminomethyl-7-deazaguanine (PreQ1) at position 34 (anticodon wobble position) in tRNAs with GU(N) anticodons (tRNA-Asp, -Asn, -His and -Tyr). Catalysis occurs through a double-displacement mechanism. The nucleophile active site attacks the C1' of nucleotide 34 to detach the guanine base from the RNA, forming a covalent enzyme-RNA intermediate. The proton acceptor active site deprotonates the incoming PreQ1, allowing a nucleophilic attack on the C1' of the ribose to form the product. After dissociation, two additional enzymatic reactions on the tRNA convert PreQ1 to queuine (Q), resulting in the hypermodified nucleoside queuosine (7-(((4,5-cis-dihydroxy-2-cyclopenten-1-yl)amino)methyl)-7-deazaguanosine). This is Queuine tRNA-ribosyltransferase from Acinetobacter baumannii (strain ACICU).